A 702-amino-acid polypeptide reads, in one-letter code: Ribosomal RNA large subunit methyltransferase K/L (702 aa).

One can recognise a THUMP domain in the interval Leu-43 to Leu-154.

This sequence belongs to the methyltransferase superfamily. RlmKL family.

It localises to the cytoplasm. The catalysed reaction is guanosine(2445) in 23S rRNA + S-adenosyl-L-methionine = N(2)-methylguanosine(2445) in 23S rRNA + S-adenosyl-L-homocysteine + H(+). It carries out the reaction guanosine(2069) in 23S rRNA + S-adenosyl-L-methionine = N(2)-methylguanosine(2069) in 23S rRNA + S-adenosyl-L-homocysteine + H(+). In terms of biological role, specifically methylates the guanine in position 2445 (m2G2445) and the guanine in position 2069 (m7G2069) of 23S rRNA. This Shigella boydii serotype 4 (strain Sb227) protein is Ribosomal RNA large subunit methyltransferase K/L.